Here is a 520-residue protein sequence, read N- to C-terminus: Transactivator/viroplasmin protein (520 aa).

2 disordered regions span residues 103–126 (SDFLRPHQGIPIPPKPEPSSSVAP) and 487–520 (EDASADSGPKDGPPPTRSIVEKEDVPTTSSKQVD).

The protein belongs to the caulimoviridae viroplasmin family.

The protein resides in the host cytoplasm. Functionally, enhances the ribosomal termination-reinitiation event leading to the translation of major open reading frames on the polycistronic viral RNAs. The sequence is that of Transactivator/viroplasmin protein from Arabidopsis thaliana (Mouse-ear cress).